A 359-amino-acid polypeptide reads, in one-letter code: Insulin gene enhancer protein isl-2a (359 aa).

LIM zinc-binding domains are found at residues 27-80 and 30-143; these read CVGC…CKRD and CGSQ…RADH. Residues 171–190 form a disordered region; sequence EPVPVRQPPHRNHVHKQSEK. The segment at residues 191–250 is a DNA-binding region (homeobox); sequence TTRVRTVLNEKQLHTLRTCYNANPRPDALMKEQLVEMTGLSPRVIRVWFQNKRCKDKKKS. A compositionally biased stretch (low complexity) spans 326–336; the sequence is ESGSLGNSSGS. The disordered stretch occupies residues 326 to 359; it reads ESGSLGNSSGSDVTSLSSQLPDTPNSMVPSPVET. Residues 337 to 359 show a composition bias toward polar residues; that stretch reads DVTSLSSQLPDTPNSMVPSPVET.

The protein localises to the nucleus. Binds to one of the cis-acting domain of the insulin gene enhancer. May be involved in subtype specialization of primary motoneurons. The protein is Insulin gene enhancer protein isl-2a (isl2a) of Danio rerio (Zebrafish).